We begin with the raw amino-acid sequence, 89 residues long: MSDNNEKQTLRTVEGRVVSNKMDKTVTVLVERQVKHALYGKYIKRSTKLHAHDADNACNEGDVVRVTEIAPMSKTKNWRVVEIVTRSAE.

Belongs to the universal ribosomal protein uS17 family. As to quaternary structure, part of the 30S ribosomal subunit.

One of the primary rRNA binding proteins, it binds specifically to the 5'-end of 16S ribosomal RNA. This is Small ribosomal subunit protein uS17 from Xanthomonas axonopodis pv. citri (strain 306).